A 481-amino-acid polypeptide reads, in one-letter code: Argininosuccinate lyase (481 aa).

The protein belongs to the lyase 1 family. Argininosuccinate lyase subfamily.

The protein localises to the cytoplasm. It carries out the reaction 2-(N(omega)-L-arginino)succinate = fumarate + L-arginine. Its pathway is amino-acid biosynthesis; L-arginine biosynthesis; L-arginine from L-ornithine and carbamoyl phosphate: step 3/3. This is Argininosuccinate lyase from Methanococcus maripaludis (strain C6 / ATCC BAA-1332).